We begin with the raw amino-acid sequence, 113 residues long: Large ribosomal subunit protein uL22 (113 aa).

This sequence belongs to the universal ribosomal protein uL22 family. As to quaternary structure, part of the 50S ribosomal subunit.

This protein binds specifically to 23S rRNA; its binding is stimulated by other ribosomal proteins, e.g. L4, L17, and L20. It is important during the early stages of 50S assembly. It makes multiple contacts with different domains of the 23S rRNA in the assembled 50S subunit and ribosome. In terms of biological role, the globular domain of the protein is located near the polypeptide exit tunnel on the outside of the subunit, while an extended beta-hairpin is found that lines the wall of the exit tunnel in the center of the 70S ribosome. The polypeptide is Large ribosomal subunit protein uL22 (Halothermothrix orenii (strain H 168 / OCM 544 / DSM 9562)).